The primary structure comprises 421 residues: Signal recognition particle receptor FtsY (421 aa).

GTP contacts are provided by residues 228 to 235, 309 to 313, and 373 to 376; these read GINGAGKT, DTAGR, and TKLD.

The protein belongs to the GTP-binding SRP family. FtsY subfamily. Part of the signal recognition particle protein translocation system, which is composed of SRP and FtsY. SRP is a ribonucleoprotein composed of Ffh and a 4.5S RNA molecule.

The protein localises to the cell inner membrane. Its subcellular location is the cytoplasm. The enzyme catalyses GTP + H2O = GDP + phosphate + H(+). In terms of biological role, involved in targeting and insertion of nascent membrane proteins into the cytoplasmic membrane. Acts as a receptor for the complex formed by the signal recognition particle (SRP) and the ribosome-nascent chain (RNC). Interaction with SRP-RNC leads to the transfer of the RNC complex to the Sec translocase for insertion into the membrane, the hydrolysis of GTP by both Ffh and FtsY, and the dissociation of the SRP-FtsY complex into the individual components. The chain is Signal recognition particle receptor FtsY from Neisseria meningitidis serogroup B (strain ATCC BAA-335 / MC58).